The primary structure comprises 706 residues: Septin ring organizing protein mid2 (706 aa).

Disordered stretches follow at residues 62-102 and 145-180; these read STAP…PFST and DEAS…KKNP. Polar residues-rich tracts occupy residues 81–90 and 149–169; these read YDQTLSNSSS and NKSS…SNQG. At Ser-379 the chain carries Phosphoserine. Residues 583–688 form the PH domain; sequence TLLCDGYLCQ…WMSTLRQHLG (106 aa).

Belongs to the BUD4 family.

It is found in the cytoplasm. Its subcellular location is the cell cortex. It localises to the cytoskeleton. Responsible for the proper stability and function of septins during cytokinesis. Required for the correct formation of the medial septin ring structure in mitosis and for the proper localization of endo-glucanases agn1 and eng1, which are needed for efficient cell separation. May act as a landmark for the localization of hydrolytic proteins to the medial region. In Schizosaccharomyces pombe (strain 972 / ATCC 24843) (Fission yeast), this protein is Septin ring organizing protein mid2 (mid2).